Here is a 1070-residue protein sequence, read N- to C-terminus: DNA-directed RNA polymerase subunit beta (1070 aa).

It belongs to the RNA polymerase beta chain family. As to quaternary structure, in plastids the minimal PEP RNA polymerase catalytic core is composed of four subunits: alpha, beta, beta', and beta''. When a (nuclear-encoded) sigma factor is associated with the core the holoenzyme is formed, which can initiate transcription.

It is found in the plastid. Its subcellular location is the chloroplast. It carries out the reaction RNA(n) + a ribonucleoside 5'-triphosphate = RNA(n+1) + diphosphate. Its function is as follows. DNA-dependent RNA polymerase catalyzes the transcription of DNA into RNA using the four ribonucleoside triphosphates as substrates. The protein is DNA-directed RNA polymerase subunit beta of Phalaenopsis aphrodite subsp. formosana (Moth orchid).